The sequence spans 358 residues: tRNA-specific 2-thiouridylase MnmA (358 aa).

ATP-binding positions include 6-13 (AMSGGVDS) and Leu32. The active-site Nucleophile is the Cys101. Cys101 and Cys193 are oxidised to a cystine. Gly125 serves as a coordination point for ATP. Positions 143–145 (KDQ) are interaction with tRNA. The active-site Cysteine persulfide intermediate is the Cys193.

It belongs to the MnmA/TRMU family.

The protein localises to the cytoplasm. It carries out the reaction S-sulfanyl-L-cysteinyl-[protein] + uridine(34) in tRNA + AH2 + ATP = 2-thiouridine(34) in tRNA + L-cysteinyl-[protein] + A + AMP + diphosphate + H(+). In terms of biological role, catalyzes the 2-thiolation of uridine at the wobble position (U34) of tRNA, leading to the formation of s(2)U34. This is tRNA-specific 2-thiouridylase MnmA from Mycobacterium avium (strain 104).